The following is a 77-amino-acid chain: EMBRYO SURROUNDING FACTOR 1-like protein 9 (77 aa).

A signal peptide spans 1–22 (MSSSRFLILCIILISFFPLHEC). Cystine bridges form between cysteine 38–cysteine 54, cysteine 43–cysteine 75, cysteine 52–cysteine 71, and cysteine 55–cysteine 64.

Belongs to the MEG family. As to expression, expressed in flowers.

The polypeptide is EMBRYO SURROUNDING FACTOR 1-like protein 9 (ESFL9) (Arabidopsis thaliana (Mouse-ear cress)).